The primary structure comprises 530 residues: Type II methyltransferase M.MjaII (530 aa).

Belongs to the N(4)/N(6)-methyltransferase family. N(4) subfamily.

It carries out the reaction a 2'-deoxycytidine in DNA + S-adenosyl-L-methionine = an N(4)-methyl-2'-deoxycytidine in DNA + S-adenosyl-L-homocysteine + H(+). An alpha subtype methylase that recognizes the double-stranded sequence 5'-GGNCC-3', methylates C-5 on both strands, and protects the DNA from cleavage by the MjaII endonuclease. This Methanocaldococcus jannaschii (strain ATCC 43067 / DSM 2661 / JAL-1 / JCM 10045 / NBRC 100440) (Methanococcus jannaschii) protein is Type II methyltransferase M.MjaII (mjaIIM).